The primary structure comprises 354 residues: Phosphatidylserine decarboxylase proenzyme (354 aa).

The helical transmembrane segment at tyrosine 18–tyrosine 36 threads the bilayer. Active-site charge relay system; for autoendoproteolytic cleavage activity residues include aspartate 139, histidine 198, and serine 308. The active-site Schiff-base intermediate with substrate; via pyruvic acid; for decarboxylase activity is serine 308. Position 308 is a pyruvic acid (Ser); by autocatalysis (serine 308).

Belongs to the phosphatidylserine decarboxylase family. PSD-B subfamily. Eukaryotic type I sub-subfamily. As to quaternary structure, heterodimer of a large membrane-associated beta subunit and a small pyruvoyl-containing alpha subunit. Pyruvate is required as a cofactor. Is synthesized initially as an inactive proenzyme. Formation of the active enzyme involves a self-maturation process in which the active site pyruvoyl group is generated from an internal serine residue via an autocatalytic post-translational modification. Two non-identical subunits are generated from the proenzyme in this reaction, and the pyruvate is formed at the N-terminus of the alpha chain, which is derived from the carboxyl end of the proenzyme. The autoendoproteolytic cleavage occurs by a canonical serine protease mechanism, in which the side chain hydroxyl group of the serine supplies its oxygen atom to form the C-terminus of the beta chain, while the remainder of the serine residue undergoes an oxidative deamination to produce ammonia and the pyruvoyl prosthetic group on the alpha chain. During this reaction, the Ser that is part of the protease active site of the proenzyme becomes the pyruvoyl prosthetic group, which constitutes an essential element of the active site of the mature decarboxylase.

It is found in the membrane. Its subcellular location is the endoplasmic reticulum membrane. The catalysed reaction is a 1,2-diacyl-sn-glycero-3-phospho-L-serine + H(+) = a 1,2-diacyl-sn-glycero-3-phosphoethanolamine + CO2. It functions in the pathway phospholipid metabolism; phosphatidylethanolamine biosynthesis; phosphatidylethanolamine from CDP-diacylglycerol: step 2/2. With respect to regulation, protease activity is inhibited by PMSF. In terms of biological role, catalyzes the formation of phosphatidylethanolamine (PtdEtn) from phosphatidylserine (PtdSer). Plays a central role in phospholipid metabolism and in the interorganelle trafficking of phosphatidylserine. The chain is Phosphatidylserine decarboxylase proenzyme from Plasmodium knowlesi (strain H).